A 269-amino-acid polypeptide reads, in one-letter code: MVRIAIAGAAGRMGRNLVKATHQNPLSELGAGSERPESSLVGVDIGELCGIGKQGIVLVDNLEQAVEQFDVIIDFTAPASTLANLALCEQHGKKLVIGTTGFTDAQRQTIEQAAKKIPIVMAPNYSVGVNLVFKLLEKAAKVMGDYCDIEIIEAHHRHKVDAPSGTAIGMGEAIAHAMGNQLSDVAVYAREGITGERSRNEIGFATIRAGDIIGEHTAMFADIGERVEITHKATDRMTFANGAVKAAIWLAEQPAGFYTMTDVLGLNDL.

Residues 8–13 (GAAGRM) and E34 each bind NAD(+). Residue R35 participates in NADP(+) binding. NAD(+) contacts are provided by residues 98–100 (GTT) and 122–125 (APNY). The active-site Proton donor/acceptor is H155. Position 156 (H156) interacts with (S)-2,3,4,5-tetrahydrodipicolinate. K159 functions as the Proton donor in the catalytic mechanism. 165–166 (GT) is a (S)-2,3,4,5-tetrahydrodipicolinate binding site.

Belongs to the DapB family.

Its subcellular location is the cytoplasm. It catalyses the reaction (S)-2,3,4,5-tetrahydrodipicolinate + NAD(+) + H2O = (2S,4S)-4-hydroxy-2,3,4,5-tetrahydrodipicolinate + NADH + H(+). The catalysed reaction is (S)-2,3,4,5-tetrahydrodipicolinate + NADP(+) + H2O = (2S,4S)-4-hydroxy-2,3,4,5-tetrahydrodipicolinate + NADPH + H(+). It functions in the pathway amino-acid biosynthesis; L-lysine biosynthesis via DAP pathway; (S)-tetrahydrodipicolinate from L-aspartate: step 4/4. Catalyzes the conversion of 4-hydroxy-tetrahydrodipicolinate (HTPA) to tetrahydrodipicolinate. The chain is 4-hydroxy-tetrahydrodipicolinate reductase from Vibrio cholerae serotype O1 (strain ATCC 39541 / Classical Ogawa 395 / O395).